The primary structure comprises 405 residues: Coenzyme F420 hydrogenase subunit alpha (405 aa).

Positions 63, 66, 380, and 383 each coordinate Ni(2+).

Belongs to the [NiFe]/[NiFeSe] hydrogenase large subunit family. As to quaternary structure, heterocomplex of the form (alpha(1)beta(1)gamma(1))(8). Ni(2+) is required as a cofactor. It depends on iron-sulfur cluster as a cofactor. Requires FAD as cofactor.

The catalysed reaction is oxidized coenzyme F420-(gamma-L-Glu)(n) + H2 + H(+) = reduced coenzyme F420-(gamma-L-Glu)(n). Its function is as follows. Reduces the physiological low-potential two-electron acceptor coenzyme F420, and the artificial one-electron acceptor methylviologen. The sequence is that of Coenzyme F420 hydrogenase subunit alpha (frhA) from Methanothermobacter thermautotrophicus (strain ATCC 29096 / DSM 1053 / JCM 10044 / NBRC 100330 / Delta H) (Methanobacterium thermoautotrophicum).